The following is an 875-amino-acid chain: Valine--tRNA ligase (875 aa).

Positions 44–54 match the 'HIGH' region motif; sequence PNVTGKLHLGH. The short motif at 520–524 is the 'KMSKS' region element; it reads KMSKS. K523 is a binding site for ATP. A coiled-coil region spans residues 804–875; the sequence is LEGLINIEEE…VRARLAQLKQ (72 aa).

The protein belongs to the class-I aminoacyl-tRNA synthetase family. ValS type 1 subfamily. Monomer.

The protein localises to the cytoplasm. The enzyme catalyses tRNA(Val) + L-valine + ATP = L-valyl-tRNA(Val) + AMP + diphosphate. Its function is as follows. Catalyzes the attachment of valine to tRNA(Val). As ValRS can inadvertently accommodate and process structurally similar amino acids such as threonine, to avoid such errors, it has a 'posttransfer' editing activity that hydrolyzes mischarged Thr-tRNA(Val) in a tRNA-dependent manner. In Anoxybacillus flavithermus (strain DSM 21510 / WK1), this protein is Valine--tRNA ligase.